The sequence spans 208 residues: Thymidylate kinase (208 aa).

9–16 (GGEGCGKS) lines the ATP pocket.

It belongs to the thymidylate kinase family.

The enzyme catalyses dTMP + ATP = dTDP + ADP. Functionally, phosphorylation of dTMP to form dTDP in both de novo and salvage pathways of dTTP synthesis. This Dehalococcoides mccartyi (strain ATCC BAA-2100 / JCM 16839 / KCTC 5957 / BAV1) protein is Thymidylate kinase.